The chain runs to 137 residues: UBAP1-MVB12-associated (UMA)-domain containing protein 1 (137 aa).

Residues 1–72 are disordered; it reads MFHFFRKPPE…VSDPEMENKA (72 aa). The segment covering 32–44 has biased composition (basic and acidic residues); the sequence is DEQRMTARGKTSD. The segment covering 50–63 has biased composition (polar residues); that stretch reads PLETNKENSSSVTV. A UMA domain is found at 86–134; sequence LSDVPFTLAPHVLAVQGTITDLPDHLLSYDGSENLSRFWYDFTLENSVL.

The polypeptide is UBAP1-MVB12-associated (UMA)-domain containing protein 1 (Homo sapiens (Human)).